The sequence spans 261 residues: UPF0246 protein azo1887 (261 aa).

The protein belongs to the UPF0246 family.

This Azoarcus sp. (strain BH72) protein is UPF0246 protein azo1887.